The following is a 350-amino-acid chain: Peroxidase 10 (350 aa).

The N-terminal stretch at 1–27 is a signal peptide; the sequence is MDHKMSMYLFVSYLAIFTLFFKGFVSS. 4 disulfide bridges follow: Cys-57–Cys-137, Cys-90–Cys-95, Cys-143–Cys-346, and Cys-222–Cys-256. The active-site Proton acceptor is the His-88. Asp-89, Val-92, Gly-94, Asp-96, and Ser-98 together coordinate Ca(2+). A glycan (N-linked (GlcNAc...) asparagine) is linked at Asn-102. Residue Pro-185 participates in substrate binding. Asn-193 carries an N-linked (GlcNAc...) asparagine glycan. His-215 is a binding site for heme b. A Ca(2+)-binding site is contributed by Thr-216. Ca(2+)-binding residues include Asp-270, Ser-273, and Asp-278.

This sequence belongs to the peroxidase family. Classical plant (class III) peroxidase subfamily. Heme b is required as a cofactor. Requires Ca(2+) as cofactor. As to expression, expressed in the whole plant, with the highest expression in roots.

The protein localises to the secreted. The catalysed reaction is 2 a phenolic donor + H2O2 = 2 a phenolic radical donor + 2 H2O. Its function is as follows. Removal of H(2)O(2), oxidation of toxic reductants, biosynthesis and degradation of lignin, suberization, auxin catabolism, response to environmental stresses such as wounding, pathogen attack and oxidative stress. These functions might be dependent on each isozyme/isoform in each plant tissue. This is Peroxidase 10 (PER10) from Arabidopsis thaliana (Mouse-ear cress).